The following is a 469-amino-acid chain: tRNA-2-methylthio-N(6)-dimethylallyladenosine synthase (469 aa).

The region spanning 27–142 (KKVYIRTFGC…LPQMLAQRAR (116 aa)) is the MTTase N-terminal domain. [4Fe-4S] cluster-binding residues include Cys36, Cys73, Cys105, Cys179, Cys183, and Cys186. Positions 165 to 398 (KVDGAAAFVS…QATIEDNVRR (234 aa)) constitute a Radical SAM core domain. In terms of domain architecture, TRAM spans 401-467 (ERRVGTVQRV…PHSLRGEPVL (67 aa)).

This sequence belongs to the methylthiotransferase family. MiaB subfamily. Monomer. [4Fe-4S] cluster is required as a cofactor.

The protein resides in the cytoplasm. It catalyses the reaction N(6)-dimethylallyladenosine(37) in tRNA + (sulfur carrier)-SH + AH2 + 2 S-adenosyl-L-methionine = 2-methylsulfanyl-N(6)-dimethylallyladenosine(37) in tRNA + (sulfur carrier)-H + 5'-deoxyadenosine + L-methionine + A + S-adenosyl-L-homocysteine + 2 H(+). Its function is as follows. Catalyzes the methylthiolation of N6-(dimethylallyl)adenosine (i(6)A), leading to the formation of 2-methylthio-N6-(dimethylallyl)adenosine (ms(2)i(6)A) at position 37 in tRNAs that read codons beginning with uridine. In Leptothrix cholodnii (strain ATCC 51168 / LMG 8142 / SP-6) (Leptothrix discophora (strain SP-6)), this protein is tRNA-2-methylthio-N(6)-dimethylallyladenosine synthase.